A 547-amino-acid polypeptide reads, in one-letter code: Pyochelin synthase PchD (547 aa).

This sequence belongs to the ATP-dependent AMP-binding enzyme family.

The enzyme catalyses salicylate + holo-[ACP] + ATP = salicyl-[ACP] + AMP + diphosphate. The protein operates within siderophore biosynthesis. Its pathway is antifungal biosynthesis. Its function is as follows. Involved in the biosynthesis of the siderophore pyochelin. Specifically adenylates salicylate and loads it onto the holo form of PchE via a thioester linkage to the phosphopanthetheine moiety. Is also involved in the synthesis of the antifungal antibiotic dihydroaeruginoic acid (Dha or hydroxyphenyl-thiazolinyl-carboxylate), a precursor of pyochelin. This chain is Pyochelin synthase PchD, found in Pseudomonas aeruginosa (strain UCBPP-PA14).